The following is a 135-amino-acid chain: UPF0299 membrane protein PC1_1498 (135 aa).

Helical transmembrane passes span Phe-5 to Gly-25, Ala-30 to Leu-50, Gly-63 to Met-83, and Phe-93 to Phe-113.

Belongs to the UPF0299 family.

It is found in the cell inner membrane. The chain is UPF0299 membrane protein PC1_1498 from Pectobacterium carotovorum subsp. carotovorum (strain PC1).